Here is a 444-residue protein sequence, read N- to C-terminus: Exodeoxyribonuclease 7 large subunit (444 aa).

It belongs to the XseA family. In terms of assembly, heterooligomer composed of large and small subunits.

It localises to the cytoplasm. It catalyses the reaction Exonucleolytic cleavage in either 5'- to 3'- or 3'- to 5'-direction to yield nucleoside 5'-phosphates.. Bidirectionally degrades single-stranded DNA into large acid-insoluble oligonucleotides, which are then degraded further into small acid-soluble oligonucleotides. The chain is Exodeoxyribonuclease 7 large subunit from Aliivibrio salmonicida (strain LFI1238) (Vibrio salmonicida (strain LFI1238)).